A 482-amino-acid polypeptide reads, in one-letter code: Glutamyl-tRNA(Gln) amidotransferase subunit A (482 aa).

Catalysis depends on charge relay system residues Lys75 and Ser150. Ser174 (acyl-ester intermediate) is an active-site residue.

It belongs to the amidase family. GatA subfamily. In terms of assembly, heterotrimer of A, B and C subunits.

It catalyses the reaction L-glutamyl-tRNA(Gln) + L-glutamine + ATP + H2O = L-glutaminyl-tRNA(Gln) + L-glutamate + ADP + phosphate + H(+). In terms of biological role, allows the formation of correctly charged Gln-tRNA(Gln) through the transamidation of misacylated Glu-tRNA(Gln) in organisms which lack glutaminyl-tRNA synthetase. The reaction takes place in the presence of glutamine and ATP through an activated gamma-phospho-Glu-tRNA(Gln). This chain is Glutamyl-tRNA(Gln) amidotransferase subunit A, found in Thermosynechococcus vestitus (strain NIES-2133 / IAM M-273 / BP-1).